We begin with the raw amino-acid sequence, 356 residues long: S-adenosylmethionine:tRNA ribosyltransferase-isomerase (356 aa).

This sequence belongs to the QueA family. In terms of assembly, monomer.

The protein resides in the cytoplasm. It carries out the reaction 7-aminomethyl-7-carbaguanosine(34) in tRNA + S-adenosyl-L-methionine = epoxyqueuosine(34) in tRNA + adenine + L-methionine + 2 H(+). It participates in tRNA modification; tRNA-queuosine biosynthesis. Transfers and isomerizes the ribose moiety from AdoMet to the 7-aminomethyl group of 7-deazaguanine (preQ1-tRNA) to give epoxyqueuosine (oQ-tRNA). The polypeptide is S-adenosylmethionine:tRNA ribosyltransferase-isomerase (Shigella boydii serotype 4 (strain Sb227)).